The following is a 213-amino-acid chain: Octanoyltransferase (213 aa).

The BPL/LPL catalytic domain maps to 27-209; sequence AATPDEVWLC…RLLAAMPEPA (183 aa). Substrate-binding positions include 66-73, 140-142, and 153-155; these read RGGQVTYH, ALG, and GVA. Residue Cys171 is the Acyl-thioester intermediate of the active site.

It belongs to the LipB family.

It localises to the cytoplasm. It catalyses the reaction octanoyl-[ACP] + L-lysyl-[protein] = N(6)-octanoyl-L-lysyl-[protein] + holo-[ACP] + H(+). It participates in protein modification; protein lipoylation via endogenous pathway; protein N(6)-(lipoyl)lysine from octanoyl-[acyl-carrier-protein]: step 1/2. Catalyzes the transfer of endogenously produced octanoic acid from octanoyl-acyl-carrier-protein onto the lipoyl domains of lipoate-dependent enzymes. Lipoyl-ACP can also act as a substrate although octanoyl-ACP is likely to be the physiological substrate. This is Octanoyltransferase from Bordetella petrii (strain ATCC BAA-461 / DSM 12804 / CCUG 43448).